The sequence spans 309 residues: Lactamase-like protein aptB (309 aa).

His97, His99, Asp101, and His102 together coordinate Zn(2+). The Proton donor/acceptor role is filled by Asp101.

Belongs to the metallo-beta-lactamase superfamily. Zn(2+) serves as cofactor.

The catalysed reaction is 2,3,6,8,9-pentahydroxy-1-oxo-3-(2-oxopropyl)-1,2,3,4-tetrahydroanthracene-2-carboxyl-[ACP] + H2O = 2,3,6,8,9-pentahydroxy-1-oxo-3-(2-oxopropyl)-1,2,3,4-tetrahydroanthracene-2-carboxylate + holo-[ACP] + H(+). It participates in secondary metabolite biosynthesis. Its function is as follows. Lactamase-like protein; part of the gene cluster that mediates the biosynthesis of asperthecin, an anthraquinone pigment. Polyketide synthase (PKS) aptA catalyzes the formation of the aromatic polyketide from acetyl coenzyme A and seven malonyl coenzyme A molecules. Polyketide is subsequently hydrolyzed by the action of aptB into endocrocin-9-anthrone. Endocrocin-9-anthrone is then oxidized into endocrocin by aptC. Endocrocin is likely to decarboxylate spontaneously to form emodin which explains why there is no decarboxylase in the asperthecin biosynthesis cluster. Finally, aptC or another endogenous oxygenase catalyzes additional oxidation steps to form asperthecin. In Emericella nidulans (strain FGSC A4 / ATCC 38163 / CBS 112.46 / NRRL 194 / M139) (Aspergillus nidulans), this protein is Lactamase-like protein aptB.